Reading from the N-terminus, the 369-residue chain is Opsin Rh6 (369 aa).

At 1–46 (MASLHPPSFAYMRDGRNLSLAESVPAEIMHMVDPYWYQWPPLEPMW) the chain is on the extracellular side. An N-linked (GlcNAc...) asparagine glycan is attached at N17. The chain crosses the membrane as a helical span at residues 47 to 71 (FGIIGFVIAILGTMSLAGNFIVMYI). At 72-83 (FTSSKGLRTPSN) the chain is on the cytoplasmic side. Residues 84–109 (MFVVNLAFSDFMMMFTMFPPVVLNGF) form a helical membrane-spanning segment. Residues 110-123 (YGTWIMGPFLCELY) are Extracellular-facing. An intrachain disulfide couples C120 to C197. A helical membrane pass occupies residues 124-143 (GMFGSLFGCVSIWSMTLIAY). At 144–162 (DRYCVIVKGMARKPLTATA) the chain is on the cytoplasmic side. A helical transmembrane segment spans residues 163–186 (AVLRLMVVWTICGAWALMPLFGWN). Residues 187 to 210 (RYVPEGNMTACGTDYFAKDWWNRS) are Extracellular-facing. 2 N-linked (GlcNAc...) asparagine glycosylation sites follow: N193 and N208. The helical transmembrane segment at 211–238 (YIIVYSLWVYLTPLLTIIFSYWHIMKAV) threads the bilayer. At 239–274 (AAHEKAMREQAKKMNVASLRNSEADKSKAIEIKLAK) the chain is on the cytoplasmic side. Residues 275–298 (VALTTISLWFFAWTPYTIINYAGI) traverse the membrane as a helical segment. At 299–305 (FESMHLS) the chain is on the extracellular side. The chain crosses the membrane as a helical span at residues 306 to 330 (PLSTICGSVFAKANAVCNPIVYGLS). Residue K317 is modified to N6-(retinylidene)lysine. At 331 to 369 (HPKYKQVLREKMPCLACGKDDLTSDSRTQATAEISESQA) the chain is on the cytoplasmic side.

Belongs to the G-protein coupled receptor 1 family. Opsin subfamily. Post-translationally, phosphorylated on some or all of the serine and threonine residues present in the C-terminal region. As to expression, each Drosophila eye is composed of 800 facets or ommatidia. Each ommatidium contains 8 photoreceptor cells (R1-R8), the R1 to R6 cells are outer cells, while R7 and R8 are inner cells. Rh6 is expressed in a subset of R8 cells, most likely expressed in the subset of R8 cells paired with Rh4-expressing R7 cells (R7y).

It is found in the membrane. Its function is as follows. Visual pigments are the light-absorbing molecules that mediate vision. They consist of an apoprotein, opsin, covalently linked to cis-retinal. This is Opsin Rh6 (Rh6) from Drosophila melanogaster (Fruit fly).